The following is a 505-amino-acid chain: Maturase K (505 aa).

The protein belongs to the intron maturase 2 family. MatK subfamily.

Its subcellular location is the plastid. It is found in the chloroplast. In terms of biological role, usually encoded in the trnK tRNA gene intron. Probably assists in splicing its own and other chloroplast group II introns. This Rhizophora stylosa (Bakau) protein is Maturase K.